The following is a 376-amino-acid chain: MAQDPADGVYFGLMSGTSMDGVDGVAVRFAQGKPSVVLAEAFVGFAAGLRDALFALQQPGDNEIEREALAANALATRYAVCCHDLLHNSRVPAAEVRAIGVHGQTVRHRPEKGYTRQINNPALLAEMMHIDVIADFRSRDVAAGGQGAPLVPAFHATVFGAKNETRVVCNLGGISNITILNATGSVRGFDCGPANALLDEWAQRHLGKPFDENGHFAAGGQVDRTLLNALLDEPFFGQQPPKSTGRDLFNADWLDAKLPPFAALDHADVQATLVALTAVTVAREIERHASDAKAVYVCGGGARNPEILKALQQALEDSGVSGVPVMTTDALGVPPSQVEPLAFAWLAMRCVARLPGNLPAVTGASAERVLGAIYPR.

Residue 16-23 (GTSMDGVD) coordinates ATP.

Belongs to the anhydro-N-acetylmuramic acid kinase family.

The enzyme catalyses 1,6-anhydro-N-acetyl-beta-muramate + ATP + H2O = N-acetyl-D-muramate 6-phosphate + ADP + H(+). It functions in the pathway amino-sugar metabolism; 1,6-anhydro-N-acetylmuramate degradation. The protein operates within cell wall biogenesis; peptidoglycan recycling. Its function is as follows. Catalyzes the specific phosphorylation of 1,6-anhydro-N-acetylmuramic acid (anhMurNAc) with the simultaneous cleavage of the 1,6-anhydro ring, generating MurNAc-6-P. Is required for the utilization of anhMurNAc either imported from the medium or derived from its own cell wall murein, and thus plays a role in cell wall recycling. The sequence is that of Anhydro-N-acetylmuramic acid kinase from Paraburkholderia xenovorans (strain LB400).